Reading from the N-terminus, the 101-residue chain is Small ribosomal subunit protein uS10 (101 aa).

The protein belongs to the universal ribosomal protein uS10 family. Part of the 30S ribosomal subunit.

Functionally, involved in the binding of tRNA to the ribosomes. The chain is Small ribosomal subunit protein uS10 from Ureaplasma parvum serovar 3 (strain ATCC 27815 / 27 / NCTC 11736).